A 179-amino-acid polypeptide reads, in one-letter code: Shikimate kinase (179 aa).

15 to 20 is an ATP binding site; the sequence is GAGKTS. Residue Thr19 coordinates Mg(2+). Residues Asp37, Arg61, and Gly83 each contribute to the substrate site. Arg123 contacts ATP. Position 142 (Arg142) interacts with substrate.

Belongs to the shikimate kinase family. As to quaternary structure, monomer. The cofactor is Mg(2+).

It localises to the cytoplasm. It catalyses the reaction shikimate + ATP = 3-phosphoshikimate + ADP + H(+). The protein operates within metabolic intermediate biosynthesis; chorismate biosynthesis; chorismate from D-erythrose 4-phosphate and phosphoenolpyruvate: step 5/7. Its function is as follows. Catalyzes the specific phosphorylation of the 3-hydroxyl group of shikimic acid using ATP as a cosubstrate. In Coxiella burnetii (strain CbuG_Q212) (Coxiella burnetii (strain Q212)), this protein is Shikimate kinase.